Here is a 96-residue protein sequence, read N- to C-terminus: MTEYKLVVVGAGGVGKSALTIQLIQNHFVDEYDPTIEDSYRKQVVIDGETCLLDILDTAGQEEYSAMRDQYMRTGEGFLCVFAINNTKSFEDIHQY.

Met-1 is modified (N-acetylmethionine). Thr-2 bears the N-acetylthreonine; in GTPase HRas, N-terminally processed mark. Position 10–17 (10–17 (GAGGVGKS)) interacts with GTP. Residues 32–40 (YDPTIEDSY) carry the Effector region motif. GTP is bound at residue 57-61 (DTAGQ).

This sequence belongs to the small GTPase superfamily. Ras family. In terms of assembly, in its GTP-bound form interacts with PLCE1. Interacts with TBC1D10C. Interacts with RGL3. Interacts with HSPD1. Found in a complex with at least BRAF, HRAS, MAP2K1, MAPK3 and RGS14. Interacts (active GTP-bound form) with RGS14 (via RBD 1 domain). Forms a signaling complex with RASGRP1 and DGKZ. Interacts with RASSF5. Interacts with PDE6D. Interacts with IKZF3. Interacts with RACK1. Interacts with PIK3CG; the interaction is required for membrane recruitment and beta-gamma G protein dimer-dependent activation of the PI3K gamma complex PIK3CG:PIK3R6. Interacts with RAPGEF2. Interacts (active GTP-bound form) with both SHOC2 and PP1c (all isoforms) to form a tertiary complex; SHOC2 and PP1c preferably bind M-Ras/MRAS, but they also bind K-Ras/KRAS, N-Ras/NRAS and H-Ras/HRAS. Interacts (in GTP-bound form) with Oog1. Interacts (GTP-bound form) with MAPKAP1/SIN1; inhibiting H-Ras/HRAS activity. Post-translationally, ubiquitinated by the BCR(LZTR1) E3 ubiquitin ligase complex at Lys-170 in a non-degradative manner, leading to inhibit Ras signaling by decreasing Ras association with membranes.

The protein resides in the cell membrane. Its subcellular location is the golgi apparatus. The protein localises to the golgi apparatus membrane. It carries out the reaction GTP + H2O = GDP + phosphate + H(+). With respect to regulation, alternates between an inactive form bound to GDP and an active form bound to GTP. Activated by a guanine nucleotide-exchange factor (GEF) and inactivated by a GTPase-activating protein (GAP). In terms of biological role, ras proteins bind GDP/GTP and possess intrinsic GTPase activity. The sequence is that of GTPase HRas (HRAS) from Mesocricetus auratus (Golden hamster).